A 384-amino-acid chain; its full sequence is Lipoprotein LprN (384 aa).

The N-terminal stretch at 1 to 20 (MNRIWLRAIILTASSALLAG) is a signal peptide. Cys21 carries N-palmitoyl cysteine lipidation. Cys21 carries the S-diacylglycerol cysteine lipid modification.

Post-translationally, lipidated upon expression in E.coli.

Its subcellular location is the cell membrane. Its function is as follows. Stimulates the host (mouse) immune response; lipidated protein produced in E.coli stimulates T-cell proliferation in mice previously sensitized with LprN. Spleenocytes from these mice produce increased amounts of TNF-alpha and IFN-gamma, as well as somewhat increased nitric oxide levels, upon subsequent challenge with LprN. Previously sensitized mice infected with M.tuberculosis have an exacerbated disease response, suggesting this lipoprotein may down-regulate the host's immune response. This chain is Lipoprotein LprN (lprN), found in Mycobacterium tuberculosis (strain ATCC 25618 / H37Rv).